Reading from the N-terminus, the 234-residue chain is Elongation factor Tu (234 aa).

In terms of domain architecture, tr-type G spans 1–125; that stretch reads KNMITGAAQM…EVDAFIPTPE (125 aa). 47 to 50 contacts GTP; sequence NKQD.

The protein belongs to the TRAFAC class translation factor GTPase superfamily. Classic translation factor GTPase family. EF-Tu/EF-1A subfamily. In terms of assembly, monomer.

It is found in the cytoplasm. The enzyme catalyses GTP + H2O = GDP + phosphate + H(+). In terms of biological role, GTP hydrolase that promotes the GTP-dependent binding of aminoacyl-tRNA to the A-site of ribosomes during protein biosynthesis. In Prochlorothrix hollandica, this protein is Elongation factor Tu (tufA).